Consider the following 156-residue polypeptide: Snaclec A6 (156 aa).

The signal sequence occupies residues 1–23 (MGRSISVSFGLLVVFLSLSGTGA). 3 disulfide bridges follow: C27-C38, C55-C154, and C129-C146. In terms of domain architecture, C-type lectin spans 34-155 (HEGHCYKVFN…CGKPYRFTCE (122 aa)).

This sequence belongs to the snaclec family. Heterodimer; disulfide-linked. As to expression, expressed by the venom gland.

The protein resides in the secreted. Functionally, interferes with one step of hemostasis (modulation of platelet aggregation, or coagulation cascade, for example). The sequence is that of Snaclec A6 from Macrovipera lebetinus (Levantine viper).